The sequence spans 132 residues: NADH-quinone oxidoreductase subunit A (132 aa).

The next 3 helical transmembrane spans lie at 14-34, 66-86, and 96-116; these read FFTF…ISWI, FYLV…LYAW, and IGFI…IYLI.

It belongs to the complex I subunit 3 family. NDH-1 is composed of 13 different subunits. Subunits NuoA, H, J, K, L, M, N constitute the membrane sector of the complex.

It is found in the cell membrane. It catalyses the reaction a quinone + NADH + 5 H(+)(in) = a quinol + NAD(+) + 4 H(+)(out). Functionally, NDH-1 shuttles electrons from NADH, via FMN and iron-sulfur (Fe-S) centers, to quinones in the respiratory chain. The immediate electron acceptor for the enzyme in this species is believed to be ubiquinone. Couples the redox reaction to proton translocation (for every two electrons transferred, four hydrogen ions are translocated across the cytoplasmic membrane), and thus conserves the redox energy in a proton gradient. This chain is NADH-quinone oxidoreductase subunit A, found in Buchnera aphidicola subsp. Baizongia pistaciae (strain Bp).